A 351-amino-acid chain; its full sequence is Divinyl chlorophyll a/b light-harvesting protein PcbC (351 aa).

The next 6 helical transmembrane spans lie at 27 to 47 (FIAAHAAHAGLMMFWAGAFTL), 64 to 84 (LICLPHLAGLGIGGVSNGVIT), 89 to 109 (CTVIAVLHLIFSGVLGAGGLL), 203 to 223 (VMGGHAFLAFFLIIGGAFHIA), 244 to 264 (VLSYSLAGVAYCAFVAAFWCA), and 306 to 326 (LSNVHFYLGFFFLQGHLWHAL).

The protein belongs to the PsbB/PsbC family. IsiA/Pcb subfamily. In terms of assembly, the antenna complex consists of divinyl chlorophylls (a and b) and divinyl chlorophyll a/b binding proteins and binds more divinyl chlorophyll b than does the antenna complex from high-light-adapted Prochlorococcus. Divinyl chlorophyll a serves as cofactor. Requires divinyl chlorophyll b as cofactor.

It is found in the cellular thylakoid membrane. Its function is as follows. The antenna complex functions as a light receptor, it captures and delivers excitation energy to photosystems II and I. The Prochlorales pcb genes are not related to higher plant LHCs. This Prochlorococcus marinus (strain SARG / CCMP1375 / SS120) protein is Divinyl chlorophyll a/b light-harvesting protein PcbC (pcbC).